The following is a 262-amino-acid chain: Probable lipoprotein EnvF (262 aa).

The first 25 residues, 1–25 (MNKIHVTYKNLLLPITFIAATLISA), serve as a signal peptide directing secretion. Cys-26 is lipidated: N-palmitoyl cysteine. Residue Cys-26 is the site of S-diacylglycerol cysteine attachment. Positions 227 to 262 (EAEKAQQLVEQSRKDIESQRKKAAGKMNEIQQTFKK) are disordered. The span at 237–246 (QSRKDIESQR) shows a compositional bias: basic and acidic residues.

The protein resides in the cell membrane. The polypeptide is Probable lipoprotein EnvF (envF) (Salmonella typhimurium (strain LT2 / SGSC1412 / ATCC 700720)).